Consider the following 162-residue polypeptide: Protein PsaF (162 aa).

The chain is Protein PsaF (psaF) from Yersinia pestis.